The following is a 642-amino-acid chain: Threonine--tRNA ligase (642 aa).

Positions 1–61 (MPVITLPDGS…ENDATLSIIT (61 aa)) constitute a TGS domain. The interval 243–534 (DHRKIGKQLD…LTEEFAGFFP (292 aa)) is catalytic. Residues C334, H385, and H511 each contribute to the Zn(2+) site.

Belongs to the class-II aminoacyl-tRNA synthetase family. Homodimer. Zn(2+) serves as cofactor.

It localises to the cytoplasm. The catalysed reaction is tRNA(Thr) + L-threonine + ATP = L-threonyl-tRNA(Thr) + AMP + diphosphate + H(+). Its function is as follows. Catalyzes the attachment of threonine to tRNA(Thr) in a two-step reaction: L-threonine is first activated by ATP to form Thr-AMP and then transferred to the acceptor end of tRNA(Thr). Also edits incorrectly charged L-seryl-tRNA(Thr). This is Threonine--tRNA ligase from Salmonella agona (strain SL483).